We begin with the raw amino-acid sequence, 365 residues long: Aminomethyltransferase (365 aa).

The protein belongs to the GcvT family. The glycine cleavage system is composed of four proteins: P, T, L and H.

The catalysed reaction is N(6)-[(R)-S(8)-aminomethyldihydrolipoyl]-L-lysyl-[protein] + (6S)-5,6,7,8-tetrahydrofolate = N(6)-[(R)-dihydrolipoyl]-L-lysyl-[protein] + (6R)-5,10-methylene-5,6,7,8-tetrahydrofolate + NH4(+). The glycine cleavage system catalyzes the degradation of glycine. The protein is Aminomethyltransferase of Synechococcus sp. (strain CC9902).